We begin with the raw amino-acid sequence, 555 residues long: Dihydroxy-acid dehydratase (555 aa).

C46 lines the [2Fe-2S] cluster pocket. A Mg(2+)-binding site is contributed by D78. Residue C119 coordinates [2Fe-2S] cluster. Positions 120 and 121 each coordinate Mg(2+). K121 carries the N6-carboxylysine modification. C191 serves as a coordination point for [2Fe-2S] cluster. E442 contacts Mg(2+). The Proton acceptor role is filled by S468.

Belongs to the IlvD/Edd family. As to quaternary structure, homodimer. [2Fe-2S] cluster serves as cofactor. Mg(2+) is required as a cofactor.

It catalyses the reaction (2R)-2,3-dihydroxy-3-methylbutanoate = 3-methyl-2-oxobutanoate + H2O. The catalysed reaction is (2R,3R)-2,3-dihydroxy-3-methylpentanoate = (S)-3-methyl-2-oxopentanoate + H2O. The protein operates within amino-acid biosynthesis; L-isoleucine biosynthesis; L-isoleucine from 2-oxobutanoate: step 3/4. It participates in amino-acid biosynthesis; L-valine biosynthesis; L-valine from pyruvate: step 3/4. Functionally, functions in the biosynthesis of branched-chain amino acids. Catalyzes the dehydration of (2R,3R)-2,3-dihydroxy-3-methylpentanoate (2,3-dihydroxy-3-methylvalerate) into 2-oxo-3-methylpentanoate (2-oxo-3-methylvalerate) and of (2R)-2,3-dihydroxy-3-methylbutanoate (2,3-dihydroxyisovalerate) into 2-oxo-3-methylbutanoate (2-oxoisovalerate), the penultimate precursor to L-isoleucine and L-valine, respectively. This Thermus thermophilus (strain ATCC 27634 / DSM 579 / HB8) protein is Dihydroxy-acid dehydratase.